Reading from the N-terminus, the 273-residue chain is Undecaprenyl-diphosphatase (273 aa).

A run of 7 helical transmembrane segments spans residues 48-68 (AANT…VVVF), 89-109 (LTLL…VLFE), 116-136 (LFST…MIVA), 152-172 (ITYK…WPGF), 193-213 (ADFT…LSLL), 222-242 (ADIP…LLAI), and 252-272 (IRLV…YFLY).

The protein belongs to the UppP family.

Its subcellular location is the cell membrane. The catalysed reaction is di-trans,octa-cis-undecaprenyl diphosphate + H2O = di-trans,octa-cis-undecaprenyl phosphate + phosphate + H(+). Catalyzes the dephosphorylation of undecaprenyl diphosphate (UPP). Confers resistance to bacitracin. The sequence is that of Undecaprenyl-diphosphatase from Geobacillus thermodenitrificans (strain NG80-2).